We begin with the raw amino-acid sequence, 419 residues long: 2-amino-3-ketobutyrate coenzyme A ligase, mitochondrial (419 aa).

The transit peptide at M1–Q21 directs the protein to the mitochondrion. The residue at position 45 (K45) is an N6-acetyllysine; alternate. K45 is modified (N6-succinyllysine; alternate). Residue C134 to F135 coordinates pyridoxal 5'-phosphate. H159 lines the substrate pocket. K187 is subject to N6-acetyllysine; alternate. K187 is subject to N6-succinyllysine; alternate. Residues S206, D231–H234, T262–K265, and S295–N296 each bind pyridoxal 5'-phosphate. The residue at position 265 (K265) is an N6-(pyridoxal phosphate)lysine. Residues K326 and K368 each carry the N6-succinyllysine modification. Position 383 is an N6-acetyllysine; alternate (K383). At K383 the chain carries N6-succinyllysine; alternate. R389 contributes to the substrate binding site.

It belongs to the class-II pyridoxal-phosphate-dependent aminotransferase family. It depends on pyridoxal 5'-phosphate as a cofactor.

The protein resides in the mitochondrion. Its subcellular location is the nucleus. It carries out the reaction glycine + acetyl-CoA = (2S)-2-amino-3-oxobutanoate + CoA. Its pathway is amino-acid degradation; L-threonine degradation via oxydo-reductase pathway; glycine from L-threonine: step 2/2. Its function is as follows. Pyridoxal phosphate (PLP) dependent enzyme, which catalyzes the cleavage of 2-amino-3-oxobutanoate to glycine and acetyl-CoA. Catalyzes the second reaction step on the main metabolic degradation pathway for L-threonine. In Bos taurus (Bovine), this protein is 2-amino-3-ketobutyrate coenzyme A ligase, mitochondrial (GCAT).